The sequence spans 521 residues: Cytochrome P450 monooxygenase sdnF (521 aa).

The chain crosses the membrane as a helical span at residues 19–39 (YLGLLLSGTVLYTVYKLIIAI). Residues asparagine 178, asparagine 186, asparagine 191, asparagine 309, and asparagine 416 are each glycosylated (N-linked (GlcNAc...) asparagine). Residue cysteine 460 participates in heme binding.

Belongs to the cytochrome P450 family. Heme is required as a cofactor.

It localises to the membrane. Its pathway is antibiotic biosynthesis. In terms of biological role, cytochrome P450 monooxygenase; part of the gene cluster that mediates the biosynthesis of sordarin and hypoxysordarin, glycoside antibiotics with a unique tetracyclic diterpene aglycone structure. First, the geranylgeranyl diphosphate synthase sdnC constructs GGDP from farnesyl diphosphate and isopentenyl diphosphate. The diterpene cyclase sdnA then catalyzes the cyclization of GGDP to afford cycloaraneosene. Cycloaraneosene is then hydroxylated four times by the putative cytochrome P450 monooxygenases sdnB, sdnE, sdnF and sdnH to give a hydroxylated cycloaraneosene derivative such as cycloaraneosene-8,9,13,19-tetraol. Although the order of the hydroxylations is unclear, at least C8, C9 and C13 of the cycloaraneosene skeleton are hydroxylated before the sordaricin formation. Dehydration of the 13-hydroxy group of the hydroxylated cycloaraneosene derivative might be catalyzed by an unassigned hypothetical protein such as sdnG and sdnP to construct the cyclopentadiene moiety. The FAD-dependent oxidoreductase sdnN is proposed to catalyze the oxidation at C9 of the hydroxylated cycloaraneosene derivative and also catalyze the Baeyer-Villiger oxidation to give the lactone intermediate. The presumed lactone intermediate would be hydrolyzed to give an acrolein moiety and a carboxylate moiety. Then, [4+2]cycloaddition would occur between the acrolein moiety and the cyclopentadiene moiety to give sordaricin. SdnN might also be involved in the [4+2]cycloaddition after the hypothesized oxidation to accommodate the oxidized product and prompt the [4+2]cycloaddition. GDP-6-deoxy-D-altrose may be biosynthesized from GDP-D-mannose by the putative GDP-mannose-4,6-dehydratase sdnI and the short-chain dehydrogenase sdnK. The glycosyltransferase sdnJ catalyzes the attachment of 6-deoxy-D-altrose onto the 19-hydroxy group of sordaricin to give 4'-O-demethylsordarin. The methyltransferase sdnD would complete the biosynthesis of sordarin. Sordarin can be further modified into hypoxysordarin. The unique acyl chain at the 3'-hydroxy group of hypoxysordarin would be constructed by an iterative type I PKS sdnO and the trans-acting polyketide methyltransferase sdnL. SdnL would be responsible for the introduction of an alpha-methyl group of the polyketide chain. Alternatively, the beta-lactamase-like protein sdnR might be responsible for the cleavage and transfer of the polyketide chain from the PKS sdnO to sordarin. Two putative cytochrome P450 monooxygenases, sdnQ and sdnT, might catalyze the epoxidations of the polyketide chain to complete the biosynthesis of hypoxysordarin. Transcriptional regulators sdnM and sdnS are presumably encoded for the transcriptional regulation of the expression of the sdn gene cluster. This chain is Cytochrome P450 monooxygenase sdnF, found in Sordaria araneosa (Pleurage araneosa).